The chain runs to 317 residues: Ribosomal RNA small subunit methyltransferase H (317 aa).

Residues 34-36 (GGH), Asp53, Phe80, Asp98, and Gln105 contribute to the S-adenosyl-L-methionine site.

Belongs to the methyltransferase superfamily. RsmH family.

Its subcellular location is the cytoplasm. The catalysed reaction is cytidine(1402) in 16S rRNA + S-adenosyl-L-methionine = N(4)-methylcytidine(1402) in 16S rRNA + S-adenosyl-L-homocysteine + H(+). Functionally, specifically methylates the N4 position of cytidine in position 1402 (C1402) of 16S rRNA. The chain is Ribosomal RNA small subunit methyltransferase H from Tropheryma whipplei (strain TW08/27) (Whipple's bacillus).